A 240-amino-acid chain; its full sequence is Pyridoxine 5'-phosphate synthase (240 aa).

Position 6 (N6) interacts with 3-amino-2-oxopropyl phosphate. 1-deoxy-D-xylulose 5-phosphate is bound at residue 8–9 (DH). Residue R17 coordinates 3-amino-2-oxopropyl phosphate. The Proton acceptor role is filled by H42. Residues R44 and H49 each contribute to the 1-deoxy-D-xylulose 5-phosphate site. Residue E69 is the Proton acceptor of the active site. T99 contributes to the 1-deoxy-D-xylulose 5-phosphate binding site. H193 serves as the catalytic Proton donor. 3-amino-2-oxopropyl phosphate contacts are provided by residues G194 and 216–217 (GH).

It belongs to the PNP synthase family. Homooctamer; tetramer of dimers.

It is found in the cytoplasm. The catalysed reaction is 3-amino-2-oxopropyl phosphate + 1-deoxy-D-xylulose 5-phosphate = pyridoxine 5'-phosphate + phosphate + 2 H2O + H(+). Its pathway is cofactor biosynthesis; pyridoxine 5'-phosphate biosynthesis; pyridoxine 5'-phosphate from D-erythrose 4-phosphate: step 5/5. Its function is as follows. Catalyzes the complicated ring closure reaction between the two acyclic compounds 1-deoxy-D-xylulose-5-phosphate (DXP) and 3-amino-2-oxopropyl phosphate (1-amino-acetone-3-phosphate or AAP) to form pyridoxine 5'-phosphate (PNP) and inorganic phosphate. This is Pyridoxine 5'-phosphate synthase from Hydrogenobaculum sp. (strain Y04AAS1).